Here is a 317-residue protein sequence, read N- to C-terminus: L-lactate dehydrogenase (317 aa).

Residues V17, D38, K43, and 82 to 83 each bind NAD(+); that span reads GA. Residues Q85, R91, and 123–126 contribute to the substrate site; that span reads NPVD. NAD(+)-binding positions include 121-123 and S146; that span reads VAN. 151–154 serves as a coordination point for substrate; the sequence is DSAR. R156 and H171 together coordinate beta-D-fructose 1,6-bisphosphate. H178 (proton acceptor) is an active-site residue. Y224 is modified (phosphotyrosine). T233 contacts substrate.

This sequence belongs to the LDH/MDH superfamily. LDH family. As to quaternary structure, homotetramer.

It localises to the cytoplasm. The catalysed reaction is (S)-lactate + NAD(+) = pyruvate + NADH + H(+). It participates in fermentation; pyruvate fermentation to lactate; (S)-lactate from pyruvate: step 1/1. Allosterically activated by fructose 1,6-bisphosphate (FBP). Its function is as follows. Catalyzes the conversion of lactate to pyruvate. This chain is L-lactate dehydrogenase, found in Moorella thermoacetica (strain ATCC 39073 / JCM 9320).